The sequence spans 350 residues: Lipoyl synthase (350 aa).

The interval Met-1–Val-39 is disordered. [4Fe-4S] cluster-binding residues include Cys-73, Cys-78, Cys-84, Cys-99, Cys-103, Cys-106, and Ser-314. A Radical SAM core domain is found at Trp-85–Met-303.

It belongs to the radical SAM superfamily. Lipoyl synthase family. [4Fe-4S] cluster serves as cofactor.

It localises to the cytoplasm. It carries out the reaction [[Fe-S] cluster scaffold protein carrying a second [4Fe-4S](2+) cluster] + N(6)-octanoyl-L-lysyl-[protein] + 2 oxidized [2Fe-2S]-[ferredoxin] + 2 S-adenosyl-L-methionine + 4 H(+) = [[Fe-S] cluster scaffold protein] + N(6)-[(R)-dihydrolipoyl]-L-lysyl-[protein] + 4 Fe(3+) + 2 hydrogen sulfide + 2 5'-deoxyadenosine + 2 L-methionine + 2 reduced [2Fe-2S]-[ferredoxin]. It participates in protein modification; protein lipoylation via endogenous pathway; protein N(6)-(lipoyl)lysine from octanoyl-[acyl-carrier-protein]: step 2/2. In terms of biological role, catalyzes the radical-mediated insertion of two sulfur atoms into the C-6 and C-8 positions of the octanoyl moiety bound to the lipoyl domains of lipoate-dependent enzymes, thereby converting the octanoylated domains into lipoylated derivatives. This chain is Lipoyl synthase, found in Ectopseudomonas mendocina (strain ymp) (Pseudomonas mendocina).